The chain runs to 272 residues: Shikimate dehydrogenase (NADP(+)) (272 aa).

Residues 14–16 (SRS) and Thr-61 each bind shikimate. Lys-65 (proton acceptor) is an active-site residue. Glu-77 contacts NADP(+). Asn-86 and Asp-102 together coordinate shikimate. NADP(+) contacts are provided by residues 126 to 130 (GVGGA), 149 to 154 (NRTFPR), and Met-213. Tyr-215 serves as a coordination point for shikimate. NADP(+) is bound at residue Gly-237.

This sequence belongs to the shikimate dehydrogenase family. Homodimer.

The enzyme catalyses shikimate + NADP(+) = 3-dehydroshikimate + NADPH + H(+). It functions in the pathway metabolic intermediate biosynthesis; chorismate biosynthesis; chorismate from D-erythrose 4-phosphate and phosphoenolpyruvate: step 4/7. In terms of biological role, involved in the biosynthesis of the chorismate, which leads to the biosynthesis of aromatic amino acids. Catalyzes the reversible NADPH linked reduction of 3-dehydroshikimate (DHSA) to yield shikimate (SA). The sequence is that of Shikimate dehydrogenase (NADP(+)) from Sodalis glossinidius (strain morsitans).